Consider the following 353-residue polypeptide: Phospho-N-acetylmuramoyl-pentapeptide-transferase (353 aa).

The next 10 helical transmembrane spans lie at 22 to 42, 65 to 85, 88 to 108, 129 to 149, 161 to 181, 192 to 212, 228 to 248, 256 to 276, 281 to 301, and 330 to 350; these read FAFFIALCLSLFLMPKFITWA, TPTMGGLIFISSAVIASLSCI, DNIFAISALLCLILFCLIGLI, LLTQIIAGLICILPLYFSSEL, PLFDMEIFAIAFWILVLISSS, GLATVPSIFSLSTLGIFLYLS, GLGEVVIICAALIGALMGFLW, VFMGDSGSLALGGFIGFLAII, ILLLLIGFVFVLETVSVILQV, and KIIVRFWMIALLSNLLALASI.

It belongs to the glycosyltransferase 4 family. MraY subfamily. Mg(2+) is required as a cofactor.

The protein resides in the cell inner membrane. It carries out the reaction UDP-N-acetyl-alpha-D-muramoyl-L-alanyl-gamma-D-glutamyl-meso-2,6-diaminopimeloyl-D-alanyl-D-alanine + di-trans,octa-cis-undecaprenyl phosphate = di-trans,octa-cis-undecaprenyl diphospho-N-acetyl-alpha-D-muramoyl-L-alanyl-D-glutamyl-meso-2,6-diaminopimeloyl-D-alanyl-D-alanine + UMP. It participates in cell wall biogenesis; peptidoglycan biosynthesis. In terms of biological role, catalyzes the initial step of the lipid cycle reactions in the biosynthesis of the cell wall peptidoglycan: transfers peptidoglycan precursor phospho-MurNAc-pentapeptide from UDP-MurNAc-pentapeptide onto the lipid carrier undecaprenyl phosphate, yielding undecaprenyl-pyrophosphoryl-MurNAc-pentapeptide, known as lipid I. The chain is Phospho-N-acetylmuramoyl-pentapeptide-transferase from Campylobacter jejuni subsp. jejuni serotype O:23/36 (strain 81-176).